Here is a 231-residue protein sequence, read N- to C-terminus: NADH-ubiquinone oxidoreductase chain 4 (231 aa).

A run of 6 helical transmembrane segments spans residues 1 to 21 (PIAG…YGII), 34 to 54 (LFLP…LTCL), 63 to 85 (IAYS…TPWG), 89 to 111 (AMAL…NMTY), 124 to 146 (GLHN…NIAI), and 169 to 189 (TIII…HMFL).

This sequence belongs to the complex I subunit 4 family.

It is found in the mitochondrion membrane. The enzyme catalyses a ubiquinone + NADH + 5 H(+)(in) = a ubiquinol + NAD(+) + 4 H(+)(out). Core subunit of the mitochondrial membrane respiratory chain NADH dehydrogenase (Complex I) that is believed to belong to the minimal assembly required for catalysis. Complex I functions in the transfer of electrons from NADH to the respiratory chain. The immediate electron acceptor for the enzyme is believed to be ubiquinone. This Crotalus lepidus (Banded rock rattlesnake) protein is NADH-ubiquinone oxidoreductase chain 4 (MT-ND4).